Here is a 188-residue protein sequence, read N- to C-terminus: MKISANSIRTGNILVYNNDLWVVSKQPEHTQPGKGGAYVQVEMKNLKTGTKRNERFSSSDHLEKAELEQKDYQFLYFEDNNIVLMDNQTFEQISVNKEILDEKLPFLTENMIVKVEFYNEKPLSIELPATVILEIIETDPVIKGATATASYKPATLANGVKVKVPQYLEIGEKIVVKTEDLTYVERSK.

This sequence belongs to the elongation factor P family.

It localises to the cytoplasm. Its pathway is protein biosynthesis; polypeptide chain elongation. Involved in peptide bond synthesis. Stimulates efficient translation and peptide-bond synthesis on native or reconstituted 70S ribosomes in vitro. Probably functions indirectly by altering the affinity of the ribosome for aminoacyl-tRNA, thus increasing their reactivity as acceptors for peptidyl transferase. This is Elongation factor P from Rickettsia bellii (strain OSU 85-389).